A 563-amino-acid chain; its full sequence is Ribulokinase (563 aa).

Belongs to the ribulokinase family.

The catalysed reaction is D-ribulose + ATP = D-ribulose 5-phosphate + ADP + H(+). It catalyses the reaction L-ribulose + ATP = L-ribulose 5-phosphate + ADP + H(+). Its pathway is carbohydrate degradation; L-arabinose degradation via L-ribulose; D-xylulose 5-phosphate from L-arabinose (bacterial route): step 2/3. The polypeptide is Ribulokinase (Halalkalibacterium halodurans (strain ATCC BAA-125 / DSM 18197 / FERM 7344 / JCM 9153 / C-125) (Bacillus halodurans)).